Reading from the N-terminus, the 434-residue chain is MAIIAIHARQIFDSRGNPTVEVDLKTAKGLFRAAVPSGASTGVHEALELRDTNSKAYMCKGVLTAVSNVNNIIAPALLKKQIPVTNQSEVDQFMIELDGKENKGNLGANAILGVSLAVCKAGAAELNLPLYRYIAKLAGHKDVIMPVPAFNVINGGSHAGNKLAMQEFMILPTGASSFTEAMQMGSEVYHNLKAVIKREFGLDACNVGDEGGFAPNIQDNMKGLQLLEEAIKIAGYTGKVEIGMDCAASEYYKKGKYDLDFKNPQSAESHWLSPDEMANVYKEMIQKYPIVSIEDPFDQDDWDAWPKLTASTNIQIVGDDLTVTNPKRIEKAIKVKACNCLLLKVNQIGSITESIEACKMAQKAGWGVMVSHRSGETEDNFIADLVVGLCTGQIKTGAPCRSERLAKYNQLLRIEEELGSTAKYAGKHFRHPQI.

2 residues coordinate substrate: H158 and E167. E210 (proton donor) is an active-site residue. Mg(2+) contacts are provided by D245, E294, and D319. Substrate contacts are provided by E294 and D319. Catalysis depends on K344, which acts as the Proton acceptor. Residues S371–S374 and K395 each bind substrate.

It belongs to the enolase family. In terms of assembly, homodimer. Requires Mg(2+) as cofactor.

It is found in the cytoplasm. The enzyme catalyses (2R)-2-phosphoglycerate = phosphoenolpyruvate + H2O. The protein operates within carbohydrate degradation; glycolysis; pyruvate from D-glyceraldehyde 3-phosphate: step 4/5. In Schistosoma japonicum (Blood fluke), this protein is Enolase (ENO).